A 418-amino-acid chain; its full sequence is CCA-adding enzyme (418 aa).

Residues S54 and R57 each contribute to the ATP site. Residues S54 and R57 each coordinate CTP. Residues D66, D68, and D118 each coordinate Mg(2+). ATP contacts are provided by H141, K161, and Y170. Positions 141, 161, and 170 each coordinate CTP.

Belongs to the tRNA nucleotidyltransferase/poly(A) polymerase family. Archaeal CCA-adding enzyme subfamily. In terms of assembly, homodimer. The cofactor is Mg(2+).

The enzyme catalyses a tRNA precursor + 2 CTP + ATP = a tRNA with a 3' CCA end + 3 diphosphate. It carries out the reaction a tRNA with a 3' CCA end + 2 CTP + ATP = a tRNA with a 3' CCACCA end + 3 diphosphate. Functionally, catalyzes the addition and repair of the essential 3'-terminal CCA sequence in tRNAs without using a nucleic acid template. Adds these three nucleotides in the order of C, C, and A to the tRNA nucleotide-73, using CTP and ATP as substrates and producing inorganic pyrophosphate. tRNA 3'-terminal CCA addition is required both for tRNA processing and repair. Also involved in tRNA surveillance by mediating tandem CCA addition to generate a CCACCA at the 3' terminus of unstable tRNAs. While stable tRNAs receive only 3'-terminal CCA, unstable tRNAs are marked with CCACCA and rapidly degraded. This Pyrobaculum islandicum (strain DSM 4184 / JCM 9189 / GEO3) protein is CCA-adding enzyme.